A 286-amino-acid chain; its full sequence is Protease HtpX homolog (286 aa).

The next 2 helical transmembrane spans lie at 6 to 26 and 28 to 48; these read TCFL…YVGG and QGMI…YFFS. Zn(2+) is bound at residue H130. E131 is a catalytic residue. H134 lines the Zn(2+) pocket. The next 2 helical transmembrane spans lie at 140-160 and 178-198; these read ILTG…ANFA and AIML…QMAI. Residue E203 coordinates Zn(2+).

This sequence belongs to the peptidase M48B family. The cofactor is Zn(2+).

The protein localises to the cell inner membrane. In Campylobacter curvus (strain 525.92), this protein is Protease HtpX homolog.